The primary structure comprises 314 residues: Methionyl-tRNA formyltransferase (314 aa).

113–116 (SLLP) provides a ligand contact to (6S)-5,6,7,8-tetrahydrofolate.

It belongs to the Fmt family.

The catalysed reaction is L-methionyl-tRNA(fMet) + (6R)-10-formyltetrahydrofolate = N-formyl-L-methionyl-tRNA(fMet) + (6S)-5,6,7,8-tetrahydrofolate + H(+). In terms of biological role, attaches a formyl group to the free amino group of methionyl-tRNA(fMet). The formyl group appears to play a dual role in the initiator identity of N-formylmethionyl-tRNA by promoting its recognition by IF2 and preventing the misappropriation of this tRNA by the elongation apparatus. In Pseudomonas aeruginosa (strain UCBPP-PA14), this protein is Methionyl-tRNA formyltransferase.